Consider the following 150-residue polypeptide: Natriuretic peptides A (150 aa).

The first 24 residues, 1–24 (MSSFTITVSFLLVLVFQFPGQTRA), serve as a signal peptide directing secretion. 2 propeptides span residues 25 to 122 (NPVY…AAPR) and 92 to 102 (DGGALGRGPWD). The disordered stretch occupies residues 77–100 (LEVPPWTGEVNPAQRDGGALGRGP). Residue S128 is modified to Phosphoserine. C129 and C145 are disulfide-bonded.

The protein belongs to the natriuretic peptide family. As to quaternary structure, homodimer; disulfide-linked antiparallel dimer. In terms of processing, the precursor molecule is proteolytically cleaved by CORIN at Arg-122 to produce the atrial natriuretic peptide. Undergoes further proteolytic cleavage by unknown proteases to give rise to long-acting natriuretic peptide, vessel dilator and kaliuretic peptide. Additional processing gives rise to the auriculin and atriopeptin peptides. In the kidneys, alternative processing by an unknown protease results in the peptide urodilatin. Cleavage by MME initiates degradation of the factor and thereby regulates its activity. Degradation by IDE results in reduced activation of NPR1 (in vitro). During IDE degradation, the resulting products can temporarily stimulate NPR2 to produce cGMP, before the fragments are completely degraded and inactivated by IDE (in vitro). Post-translationally, degraded by IDE. In terms of processing, phosphorylation on Ser-128 decreases vasorelaxant activity. In terms of tissue distribution, brain (at protein level).

The protein resides in the secreted. The protein localises to the perikaryon. Its subcellular location is the cell projection. Functionally, hormone that plays a key role in mediating cardio-renal homeostasis, and is involved in vascular remodeling and regulating energy metabolism. Acts by specifically binding and stimulating NPR1 to produce cGMP, which in turn activates effector proteins, such as PRKG1, that drive various biological responses. Regulates vasodilation, natriuresis, diuresis and aldosterone synthesis and is therefore essential for regulating blood pressure, controlling the extracellular fluid volume and maintaining the fluid-electrolyte balance. Also involved in inhibiting cardiac remodeling and cardiac hypertrophy by inducing cardiomyocyte apoptosis and attenuating the growth of cardiomyocytes and fibroblasts. Plays a role in female pregnancy by promoting trophoblast invasion and spiral artery remodeling in uterus, and thus prevents pregnancy-induced hypertension. In adipose tissue, acts in various cGMP- and PKG-dependent pathways to regulate lipid metabolism and energy homeostasis. This includes up-regulating lipid metabolism and mitochondrial oxygen utilization by activating the AMP-activated protein kinase (AMPK), and increasing energy expenditure by acting via MAPK11 to promote the UCP1-dependent thermogenesis of brown adipose tissue. Binds the clearance receptor NPR3 which removes the hormone from circulation. Its function is as follows. May have a role in cardio-renal homeostasis through regulation of natriuresis, diuresis, vasodilation, and inhibiting aldosterone synthesis. In vitro, promotes the production of cGMP and induces vasodilation. May promote natriuresis, at least in part, by enhancing prostaglandin E2 synthesis resulting in the inhibition of renal Na+-K+-ATPase. However reports on the involvement of this peptide in mammal blood volume and blood pressure homeostasis are conflicting; according to a report, in vivo it is not sufficient to activate cGMP and does not inhibit collecting duct transport nor effect diuresis and natriuresis. Appears to bind to specific receptors that are distinct from the receptors bound by atrial natriuretic peptide and vessel dilator. Possibly enhances protein excretion in urine by decreasing proximal tubular protein reabsorption. May have a role in cardio-renal homeostasis through regulation of natriuresis, diuresis, and vasodilation. In vitro, promotes the production of cGMP and induces vasodilation. May promote natriuresis, at least in part, by enhancing prostaglandin E2 synthesis resulting in the inhibition of renal Na+-K+-ATPase. However reports on the involvement of this peptide in mammal blood volume and blood pressure homeostasis are conflicting; according to a report it is not sufficient to activate cGMP and does not inhibit collecting duct transport nor effect diuresis and natriuresis. Appears to bind to specific receptors that are distinct from the receptors bound by the atrial natriuretic and long-acting natriuretic peptides. Possibly functions in protein excretion in urine by maintaining the integrity of the proximal tubules and enhancing protein excretion by decreasing proximal tubular protein reabsorption. In terms of biological role, may have a role in cardio-renal homeostasis through regulation of diuresis and inhibiting aldosterone synthesis. In vitro, promotes the production of cGMP and induces vasodilation. May promote natriuresis, at least in part, by enhancing prostaglandin E2 synthesis resulting in the inhibition of renal Na+-K+-ATPase. May have a role in potassium excretion but not sodium excretion (natriuresis). Possibly enhances protein excretion in urine by decreasing proximal tubular protein reabsorption. Functionally, hormone produced in the kidneys that appears to be important for maintaining cardio-renal homeostasis. Mediates vasodilation, natriuresis and diuresis primarily in the renal system, in order to maintain the extracellular fluid volume and control the fluid-electrolyte balance. Specifically binds and stimulates cGMP production by renal transmembrane receptors, likely NPR1. Urodilatin not ANP, may be the natriuretic peptide responsible for the regulation of sodium and water homeostasis in the kidney. Its function is as follows. May have a role in cardio-renal homeostasis through regulation of natriuresis and vasodilation. In vivo promotes natriuresis and in vitro, vasodilates renal artery strips. May have a role in cardio-renal homeostasis through regulation of regulation of natriuresis and vasodilation. In vivo promotes natriuresis. In vitro, vasodilates intestinal smooth muscle but not smooth muscle strips. In terms of biological role, may have a role in cardio-renal homeostasis through regulation of natriuresis and vasodilation. In vivo promotes natriuresis. In vitro, selectively vasodilates intestinal and vascular smooth muscle strips. Functionally, may have a role in cardio-renal homeostasis through regulation of natriuresis and vasodilation. In vivo promotes natriuresis. In vitro, selectively vasodilates intestinal smooth muscle but not vascular smooth muscle strips. The protein is Natriuretic peptides A (NPPA) of Sus scrofa (Pig).